Reading from the N-terminus, the 102-residue chain is Small ribosomal subunit protein uS10 (102 aa).

This sequence belongs to the universal ribosomal protein uS10 family. In terms of assembly, part of the 30S ribosomal subunit.

Functionally, involved in the binding of tRNA to the ribosomes. This chain is Small ribosomal subunit protein uS10, found in Lactiplantibacillus plantarum (strain ATCC BAA-793 / NCIMB 8826 / WCFS1) (Lactobacillus plantarum).